A 182-amino-acid polypeptide reads, in one-letter code: Succinate dehydrogenase cytochrome b560 subunit, mitochondrial (182 aa).

A helical transmembrane segment spans residues 65–94 (LTWMLSGFHRISGCVMAGTLLVGGIGFAVL). At 95–114 (PFDFTAFVDFIRSWNLPCAV) the chain is on the mitochondrial intermembrane side. The helical transmembrane segment at 115–139 (TAVFKYIIAFPIIFHTLNGIRFLGF) threads the bilayer. Histidine 129 contributes to the heme binding site. Over 140-147 (DLAKGVNN) the chain is Mitochondrial matrix. The helical transmembrane segment at 148 to 169 (VGQIYKSGYLVSGLSAILALAI) threads the bilayer. Residues 170-172 (VFN) lie on the Mitochondrial intermembrane side of the membrane.

This sequence belongs to the cytochrome b560 family. Component of complex II composed of four subunits: a flavoprotein (FP), iron-sulfur protein (IP), and a cytochrome b560 composed of two integral membrane proteins. The cofactor is heme.

The protein localises to the mitochondrion inner membrane. It participates in carbohydrate metabolism; tricarboxylic acid cycle. In terms of biological role, membrane-anchoring subunit of succinate dehydrogenase (SDH) that is involved in complex II of the mitochondrial electron transport chain and is responsible for transferring electrons from succinate to ubiquinone (coenzyme Q). Mediates resistance to enteropathogenic E.coli infection. The sequence is that of Succinate dehydrogenase cytochrome b560 subunit, mitochondrial (mev-1) from Caenorhabditis elegans.